Consider the following 509-residue polypeptide: Diacylglycerol kinase 5 (509 aa).

A DAGKc domain is found at 36–187 (TPASPVLVFI…IDNWHILMRM (152 aa)). Over residues 439-452 (RSVFDPSTPRHQDG) the composition is skewed to basic and acidic residues. Residues 439 to 509 (RSVFDPSTPR…SNVHGWSHVL (71 aa)) form a disordered region. Acidic residues predominate over residues 453–467 (AEDYDDNEDDSVAEG). Basic and acidic residues predominate over residues 468–489 (EEFRKFGAADTFKIPDEGEHSN). The segment covering 490–500 (KKGRASRRRNS) has biased composition (basic residues).

This sequence belongs to the eukaryotic diacylglycerol kinase family. As to quaternary structure, monomer.

It carries out the reaction a 1,2-diacyl-sn-glycerol + ATP = a 1,2-diacyl-sn-glycero-3-phosphate + ADP + H(+). Phosphorylates the second messenger diacylglycerol (DAG) to generate phosphatidic acid (PA), another important signaling molecule. PA is required for plant development and responses to abiotic stress and pathogen attack. May be involved in the accumulation of PA during cold stress. The polypeptide is Diacylglycerol kinase 5 (DGK5) (Arabidopsis thaliana (Mouse-ear cress)).